The chain runs to 208 residues: Holliday junction resolvase RecU (208 aa).

Residues 1 to 30 (MNYPNGKPFNRNKSQVGRTHKGQTSKIDYG) form a disordered region. 4 residues coordinate Mg(2+): threonine 87, aspartate 89, glutamate 102, and glutamine 121.

The protein belongs to the RecU family. The cofactor is Mg(2+).

It localises to the cytoplasm. The enzyme catalyses Endonucleolytic cleavage at a junction such as a reciprocal single-stranded crossover between two homologous DNA duplexes (Holliday junction).. Functionally, endonuclease that resolves Holliday junction intermediates in genetic recombination. Cleaves mobile four-strand junctions by introducing symmetrical nicks in paired strands. Promotes annealing of linear ssDNA with homologous dsDNA. Required for DNA repair, homologous recombination and chromosome segregation. This chain is Holliday junction resolvase RecU, found in Staphylococcus saprophyticus subsp. saprophyticus (strain ATCC 15305 / DSM 20229 / NCIMB 8711 / NCTC 7292 / S-41).